The following is a 155-amino-acid chain: Sec-independent protein translocase protein TatB (155 aa).

The helical transmembrane segment at 1–21 threads the bilayer; it reads MFGMGFFEILVVLVVAIIFLG. The segment at 109 to 155 is disordered; that stretch reads SLENNAPPKHLNKEVSNREVFHNEPPKEIELIANNNTTKHDKEKEHV. 2 stretches are compositionally biased toward basic and acidic residues: residues 119 to 138 and 146 to 155; these read LNKEVSNREVFHNEPPKEIE and TKHDKEKEHV.

The protein belongs to the TatB family. As to quaternary structure, the Tat system comprises two distinct complexes: a TatABC complex, containing multiple copies of TatA, TatB and TatC subunits, and a separate TatA complex, containing only TatA subunits. Substrates initially bind to the TatABC complex, which probably triggers association of the separate TatA complex to form the active translocon.

It localises to the cell inner membrane. Its function is as follows. Part of the twin-arginine translocation (Tat) system that transports large folded proteins containing a characteristic twin-arginine motif in their signal peptide across membranes. Together with TatC, TatB is part of a receptor directly interacting with Tat signal peptides. TatB may form an oligomeric binding site that transiently accommodates folded Tat precursor proteins before their translocation. The polypeptide is Sec-independent protein translocase protein TatB (Helicobacter acinonychis (strain Sheeba)).